The following is a 207-amino-acid chain: Interferon kappa (207 aa).

A signal peptide spans 1–27; sequence MSTKPDMIQKCLWLEILMGIFIAGTLS. Disulfide bonds link cysteine 30–cysteine 128 and cysteine 59–cysteine 181. Positions 118–148 form a coiled coil; the sequence is LDQQAEYLNQCLEEDKNENEDMKEMKENEMK.

The protein belongs to the alpha/beta interferon family. Expressed in keratinocytes, monocytes and in resting dendritic cells.

It is found in the secreted. May play a role in the regulation of immune cell function. Cytokine that imparts cellular protection against viral infection in a species-specific manner. Activates the interferon-stimulated response element signaling pathway. It is able to directly modulate cytokine release from monocytes and dendritic cells. Binds heparin. This Homo sapiens (Human) protein is Interferon kappa (IFNK).